The primary structure comprises 322 residues: Agmatinase (322 aa).

6 residues coordinate Mn(2+): H136, D160, H162, D164, D243, and D245.

Belongs to the arginase family. Agmatinase subfamily. Requires Mn(2+) as cofactor.

It catalyses the reaction agmatine + H2O = urea + putrescine. Its pathway is amine and polyamine biosynthesis; putrescine biosynthesis via agmatine pathway; putrescine from agmatine: step 1/1. Catalyzes the formation of putrescine from agmatine. This chain is Agmatinase, found in Chromobacterium violaceum (strain ATCC 12472 / DSM 30191 / JCM 1249 / CCUG 213 / NBRC 12614 / NCIMB 9131 / NCTC 9757 / MK).